The following is a 338-amino-acid chain: Fructose-1,6-bisphosphatase class 1 (338 aa).

Residues Glu90, Asp112, Leu114, and Asp115 each coordinate Mg(2+). Substrate is bound by residues Asp115–Ser118, Asn207, and Lys273. Glu279 is a Mg(2+) binding site.

This sequence belongs to the FBPase class 1 family. Homotetramer. Requires Mg(2+) as cofactor.

It localises to the cytoplasm. It catalyses the reaction beta-D-fructose 1,6-bisphosphate + H2O = beta-D-fructose 6-phosphate + phosphate. It participates in carbohydrate biosynthesis; gluconeogenesis. The chain is Fructose-1,6-bisphosphatase class 1 from Xanthomonas campestris pv. campestris (strain 8004).